A 284-amino-acid chain; its full sequence is Bifunctional protein FolD (284 aa).

NADP(+) is bound by residues 166-168 and isoleucine 232; that span reads GAS.

This sequence belongs to the tetrahydrofolate dehydrogenase/cyclohydrolase family. In terms of assembly, homodimer.

The enzyme catalyses (6R)-5,10-methylene-5,6,7,8-tetrahydrofolate + NADP(+) = (6R)-5,10-methenyltetrahydrofolate + NADPH. It carries out the reaction (6R)-5,10-methenyltetrahydrofolate + H2O = (6R)-10-formyltetrahydrofolate + H(+). It functions in the pathway one-carbon metabolism; tetrahydrofolate interconversion. Functionally, catalyzes the oxidation of 5,10-methylenetetrahydrofolate to 5,10-methenyltetrahydrofolate and then the hydrolysis of 5,10-methenyltetrahydrofolate to 10-formyltetrahydrofolate. In Tolumonas auensis (strain DSM 9187 / NBRC 110442 / TA 4), this protein is Bifunctional protein FolD.